The primary structure comprises 588 residues: Glutamate--tRNA ligase (588 aa).

The 'HIGH' region signature appears at 112–122 (PNPDFYLHLGS).

It belongs to the class-I aminoacyl-tRNA synthetase family. Glutamate--tRNA ligase type 2 subfamily.

The protein localises to the cytoplasm. It catalyses the reaction tRNA(Glu) + L-glutamate + ATP = L-glutamyl-tRNA(Glu) + AMP + diphosphate. Functionally, catalyzes the attachment of glutamate to tRNA(Glu) in a two-step reaction: glutamate is first activated by ATP to form Glu-AMP and then transferred to the acceptor end of tRNA(Glu). In Caldivirga maquilingensis (strain ATCC 700844 / DSM 13496 / JCM 10307 / IC-167), this protein is Glutamate--tRNA ligase.